Here is a 279-residue protein sequence, read N- to C-terminus: Probable endonuclease 4 (279 aa).

Positions 69, 109, 145, 179, 182, 216, 229, 231, and 261 each coordinate Zn(2+).

This sequence belongs to the AP endonuclease 2 family. Requires Zn(2+) as cofactor.

The catalysed reaction is Endonucleolytic cleavage to 5'-phosphooligonucleotide end-products.. Endonuclease IV plays a role in DNA repair. It cleaves phosphodiester bonds at apurinic or apyrimidinic (AP) sites, generating a 3'-hydroxyl group and a 5'-terminal sugar phosphate. In Chlorobium phaeovibrioides (strain DSM 265 / 1930) (Prosthecochloris vibrioformis (strain DSM 265)), this protein is Probable endonuclease 4.